The sequence spans 109 residues: Aquaporin-2 (109 aa).

At 1 to 6 (SIAFSR) the chain is on the cytoplasmic side. Residues 7 to 27 (AVFSEFLATLLFVFFGLGSAL) traverse the membrane as a helical segment. The Extracellular segment spans residues 28–35 (NWPQALPS). Residues 36 to 54 (VLQIAMAFGLAIGTLVQAL) form a helical membrane-spanning segment. Over 55 to 59 (GHISG) the chain is Cytoplasmic. Positions 60–69 (AHINPAVTVA) form an intramembrane region, discontinuously helical. Positions 63-65 (NPA) match the NPA 1 motif. Over 70 to 80 (CLVGCHVSFLR) the chain is Cytoplasmic. Residues 81-102 (ATFYLAAQLLGAVAGAAILHEI) traverse the membrane as a helical segment. Residues 103–109 (TPPDIRG) lie on the Extracellular side of the membrane.

The protein belongs to the MIP/aquaporin (TC 1.A.8) family. Homotetramer. In terms of processing, serine phosphorylation is necessary and sufficient for expression at the apical membrane. Endocytosis is not phosphorylation-dependent. Post-translationally, N-glycosylated.

It is found in the apical cell membrane. The protein resides in the basolateral cell membrane. The protein localises to the cell membrane. Its subcellular location is the cytoplasmic vesicle membrane. It localises to the golgi apparatus. It is found in the trans-Golgi network membrane. The enzyme catalyses H2O(in) = H2O(out). It catalyses the reaction glycerol(in) = glycerol(out). In terms of biological role, forms a water-specific channel that provides the plasma membranes of renal collecting duct with high permeability to water, thereby permitting water to move in the direction of an osmotic gradient. Plays an essential role in renal water homeostasis. Could also be permeable to glycerol. This chain is Aquaporin-2, found in Dugong dugon (Dugong).